An 861-amino-acid polypeptide reads, in one-letter code: Bifunctional uridylyltransferase/uridylyl-removing enzyme (861 aa).

The segment at 1–321 (MKNDNRIIKN…VYHQKQKIIR (321 aa)) is uridylyltransferase. Residues 322 to 678 (LDDEFQLSNR…IMPHHSQGGT (357 aa)) are uridylyl-removing. One can recognise an HD domain in the interval 440–562 (VDQHTLFVIR…LPHARYLDYL (123 aa)). 2 ACT domains span residues 679 to 760 (EVFI…AVSR) and 788 to 861 (QLFL…KSKY).

This sequence belongs to the GlnD family. Mg(2+) is required as a cofactor.

It carries out the reaction [protein-PII]-L-tyrosine + UTP = [protein-PII]-uridylyl-L-tyrosine + diphosphate. The catalysed reaction is [protein-PII]-uridylyl-L-tyrosine + H2O = [protein-PII]-L-tyrosine + UMP + H(+). With respect to regulation, uridylyltransferase (UTase) activity is inhibited by glutamine, while glutamine activates uridylyl-removing (UR) activity. Functionally, modifies, by uridylylation and deuridylylation, the PII regulatory proteins (GlnB and homologs), in response to the nitrogen status of the cell that GlnD senses through the glutamine level. Under low glutamine levels, catalyzes the conversion of the PII proteins and UTP to PII-UMP and PPi, while under higher glutamine levels, GlnD hydrolyzes PII-UMP to PII and UMP (deuridylylation). Thus, controls uridylylation state and activity of the PII proteins, and plays an important role in the regulation of nitrogen assimilation and metabolism. The polypeptide is Bifunctional uridylyltransferase/uridylyl-removing enzyme (Legionella pneumophila subsp. pneumophila (strain Philadelphia 1 / ATCC 33152 / DSM 7513)).